The primary structure comprises 326 residues: uncharacterized protein (326 aa).

2 helical membrane passes run 9–29 and 33–53; these read WVVL…RWSL and ISIC…ANSY. Residues Asp120, Asn148, Tyr214, Lys218, and Thr252 each coordinate NADP(+). Tyr214 acts as the Proton acceptor in catalysis. The Lowers pKa of active site Tyr role is filled by Lys218.

Belongs to the short-chain dehydrogenases/reductases (SDR) family.

The protein resides in the mitochondrion membrane. Functionally, involved in the resistance to DNA-damaging agents. This is an uncharacterized protein from Saccharomyces cerevisiae (strain ATCC 204508 / S288c) (Baker's yeast).